Here is a 296-residue protein sequence, read N- to C-terminus: Partitioning protein REP2 (296 aa).

An N-acetylmethionine modification is found at Met1. Residues 1–57 (MDDIETAKNLTVKARTAYSVWDVCRLFIEMIAPDVDIDIESKRKSDELLFPGYVIRP) are interaction with REP1. The interval 58–296 (MESLTTGRPY…GRKSRNTSRV (239 aa)) is DNA-binding, and self-association. The disordered stretch occupies residues 228-296 (SELEGRTEVN…GRKSRNTSRV (69 aa)). Basic residues predominate over residues 275–296 (PTKKRRVATRVRGRKSRNTSRV). The tract at residues 276 to 296 (TKKRRVATRVRGRKSRNTSRV) is nuclear localization.

As to quaternary structure, interacts with REP1.

It is found in the nucleus. In terms of biological role, part of the plasmid partitioning system, which ensures the equal distribution of replicated plasmid molecules to daughter cells. The plasmids exist as well-organized plasmid foci within the nucleus that stay together throughout the cell-cycle and act as entity during segregation, effetively reducing copy number to one. Plasmid partitioning requires the proteins REP1, REP2, and a cis-acting locus STB (REP3). REP1-REP2 stably associate with CSE4-containing chromatin at STB during S-phase, marking the locus with a centromeric tag, and thereby probably catching mitotic spindle microtubules to the plasmid cluster and coupling plasmid segregation to chromosome segregation. REP1-REP2 are required to recruit the cohesin complex to the STB locus for pairing of the replicated plasmid cluster, a prerequisite for successful plasmid segregation. REP1-REP2 also negatively regulate expression of site-specific recombinase FLP and of RAF1. This chain is Partitioning protein REP2 (REP2), found in Saccharomyces cerevisiae (strain ATCC 204508 / S288c) (Baker's yeast).